The following is a 721-amino-acid chain: BBSome complex member BBS2 (721 aa).

Residues 325–369 are a coiled coil; that stretch reads KGNLLDTSVEQDLIRELSQKKQNLLLELRNYEESTKAELSSPLNE.

Part of BBSome complex, that contains BBS1, BBS2, BBS4, BBS5, BBS7, BBS8/TTC8, BBS9 and BBIP10. Interacts (via C-terminus) with BBS7. Interacts (via coiled coil domain) with MKKS. Interacts with CCDC28B. Interacts with DLEC1.

It localises to the cell projection. The protein resides in the cilium membrane. Its subcellular location is the cytoplasm. The protein localises to the cytoskeleton. It is found in the microtubule organizing center. It localises to the centrosome. The protein resides in the centriolar satellite. In terms of biological role, the BBSome complex is thought to function as a coat complex required for sorting of specific membrane proteins to the primary cilia. The BBSome complex is required for ciliogenesis but is dispensable for centriolar satellite function. This ciliogenic function is mediated in part by the Rab8 GDP/GTP exchange factor, which localizes to the basal body and contacts the BBSome. Rab8(GTP) enters the primary cilium and promotes extension of the ciliary membrane. Firstly the BBSome associates with the ciliary membrane and binds to RAB3IP/Rabin8, the guanosyl exchange factor (GEF) for Rab8 and then the Rab8-GTP localizes to the cilium and promotes docking and fusion of carrier vesicles to the base of the ciliary membrane. The BBSome complex, together with the LTZL1, controls SMO ciliary trafficking and contributes to the sonic hedgehog (SHH) pathway regulation. Required for proper BBSome complex assembly and its ciliary localization. This chain is BBSome complex member BBS2 (Bbs2), found in Mus musculus (Mouse).